Reading from the N-terminus, the 195-residue chain is ATP-dependent Clp protease proteolytic subunit 2 (195 aa).

Residue Ser98 is the Nucleophile of the active site. His123 is an active-site residue.

The protein belongs to the peptidase S14 family. As to quaternary structure, fourteen ClpP subunits assemble into 2 heptameric rings which stack back to back to give a disk-like structure with a central cavity, resembling the structure of eukaryotic proteasomes.

It localises to the cytoplasm. The catalysed reaction is Hydrolysis of proteins to small peptides in the presence of ATP and magnesium. alpha-casein is the usual test substrate. In the absence of ATP, only oligopeptides shorter than five residues are hydrolyzed (such as succinyl-Leu-Tyr-|-NHMec, and Leu-Tyr-Leu-|-Tyr-Trp, in which cleavage of the -Tyr-|-Leu- and -Tyr-|-Trp bonds also occurs).. Cleaves peptides in various proteins in a process that requires ATP hydrolysis. Has a chymotrypsin-like activity. Plays a major role in the degradation of misfolded proteins. ClpXP2 is involved in the complete degradation of the Site-2 clipped anti-sigma-W factor RsiW. This results in the release of SigW and the transcription activation of the genes under the control of the sigma-W factor. The polypeptide is ATP-dependent Clp protease proteolytic subunit 2 (Shouchella clausii (strain KSM-K16) (Alkalihalobacillus clausii)).